Here is a 331-residue protein sequence, read N- to C-terminus: Glyceraldehyde-3-phosphate dehydrogenase, cytosolic (331 aa).

NAD(+) contacts are provided by residues 11-12 (RI), D33, and R77. D-glyceraldehyde 3-phosphate is bound by residues 148-150 (SCT), T179, 208-209 (TG), and R231. C149 serves as the catalytic Nucleophile. Residue N313 coordinates NAD(+).

Belongs to the glyceraldehyde-3-phosphate dehydrogenase family. In terms of assembly, homotetramer.

The protein localises to the cytoplasm. The catalysed reaction is D-glyceraldehyde 3-phosphate + phosphate + NAD(+) = (2R)-3-phospho-glyceroyl phosphate + NADH + H(+). It participates in carbohydrate degradation; glycolysis; pyruvate from D-glyceraldehyde 3-phosphate: step 1/5. The polypeptide is Glyceraldehyde-3-phosphate dehydrogenase, cytosolic (GAPC) (Leishmania mexicana).